The sequence spans 177 residues: Calcineurin subunit B (177 aa).

4 EF-hand domains span residues 25–60, 62–92, 94–129, and 135–170; these read KEIK…AVNP, VKRV…FNAQ, DKQR…MVGN, and QLQQ…QDLE. 20 residues coordinate Ca(2+): Asp-38, Asp-40, Asn-42, Thr-44, Glu-49, Asp-70, Asn-72, Asp-74, Ser-76, Glu-81, Asp-107, Asp-109, Asp-111, Tyr-113, Glu-118, Asp-148, Asp-150, Asp-152, Lys-154, and Glu-159.

It belongs to the calcineurin regulatory subunit family. As to quaternary structure, composed of a catalytic subunit (A) and a regulatory subunit (B).

In terms of biological role, regulatory subunit of calcineurin, a calcium-dependent, calmodulin stimulated protein phosphatase. Confers calcium sensitivity. This is Calcineurin subunit B (CNB1) from Naegleria gruberi (Amoeba).